The chain runs to 623 residues: Glutathione import ATP-binding protein GsiA (623 aa).

ABC transporter domains lie at 15-269 (VENL…RALL) and 314-564 (LRVR…RKLL). Residues 49 to 56 (GESGSGKS) and 357 to 364 (GESGSGKS) contribute to the ATP site.

Belongs to the ABC transporter superfamily. Glutathione importer (TC 3.A.1.5.11) family. As to quaternary structure, the complex is composed of two ATP-binding proteins (GsiA), two transmembrane proteins (GsiC and GsiD) and a solute-binding protein (GsiB).

It is found in the cell inner membrane. It catalyses the reaction glutathione(out) + ATP + H2O = glutathione(in) + ADP + phosphate + H(+). Its function is as follows. Part of the ABC transporter complex GsiABCD involved in glutathione import. Responsible for energy coupling to the transport system. This Shigella flexneri protein is Glutathione import ATP-binding protein GsiA.